We begin with the raw amino-acid sequence, 110 residues long: UPF0060 membrane protein Pfl01_4105 (110 aa).

The next 4 membrane-spanning stretches (helical) occupy residues 5-25 (LWFFLAALFEIAGCFAFWMWL), 28-48 (GKSALWVIPALISLTLFALLL), 59-79 (AYAAYGGIYIIASIGWLAVVE), and 84-104 (LGSDWIGVALCVIGATVILFG).

This sequence belongs to the UPF0060 family.

It is found in the cell inner membrane. The protein is UPF0060 membrane protein Pfl01_4105 of Pseudomonas fluorescens (strain Pf0-1).